A 476-amino-acid polypeptide reads, in one-letter code: UDP-glycosyltransferase 71C3 (476 aa).

Residues serine 290, 349–351, 366–374, and 388–391 contribute to the UDP-alpha-D-glucose site; these read APQ, HCGWNSVLE, and YAEQ.

It belongs to the UDP-glycosyltransferase family.

In terms of biological role, possesses low quercetin 3-O-glucosyltransferase activity in vitro. The protein is UDP-glycosyltransferase 71C3 (UGT71C3) of Arabidopsis thaliana (Mouse-ear cress).